A 453-amino-acid polypeptide reads, in one-letter code: Transmembrane protease serine 3 (453 aa).

Residues 1-48 (MGENDPPAAEAPFSFRSLFGLDDLKISPVAPDGDAVAAQILSLLPLKF) are Cytoplasmic-facing. A helical; Signal-anchor for type II membrane protein membrane pass occupies residues 49–69 (FPIIVIGIIALILALAIGLGI). Over 70–453 (HFDCSGKYRC…HEQLERDLKT (384 aa)) the chain is Extracellular. Positions 72–108 (DCSGKYRCHSSFKCIELTARCDGVSDCKNAEDEYRCV) constitute an LDL-receptor class A domain. 10 disulfides stabilise this stretch: Cys-73–Cys-85, Cys-79–Cys-98, Cys-92–Cys-107, Cys-129–Cys-194, Cys-142–Cys-204, Cys-207–Cys-324, Cys-242–Cys-258, Cys-338–Cys-406, Cys-369–Cys-385, and Cys-396–Cys-424. Residues 104-205 (EYRCVRVSGQ…SGHVVTLKCS (102 aa)) enclose the SRCR domain. The Peptidase S1 domain maps to 217-448 (IVGGNMSSLT…FLDWIHEQLE (232 aa)). An N-linked (GlcNAc...) asparagine glycan is attached at Asn-221. Residues His-257 and Asp-304 each act as charge relay system in the active site. Ser-400 serves as the catalytic Charge relay system.

This sequence belongs to the peptidase S1 family. Post-translationally, undergoes autoproteolytic activation. Strongly expressed in liver, cochlea, brain, cerebellum, spleen, lung, and muscle and at a lower degree in retina, kidney, and heart. Expressed in the spiral ganglion, the cells supporting the organ of Corti and the stria vascularis. Isoform 2 is strongly expressed only in the cochlea with very faint expression in the cerebellum, spleen and muscle.

The protein localises to the endoplasmic reticulum membrane. In terms of biological role, probable serine protease that plays a role in hearing. Acts as a permissive factor for cochlear hair cell survival and activation at the onset of hearing and is required for saccular hair cell survival. Activates ENaC (in vitro). In Mus musculus (Mouse), this protein is Transmembrane protease serine 3 (Tmprss3).